A 181-amino-acid chain; its full sequence is Large ribosomal subunit protein uL5 (181 aa).

The protein belongs to the universal ribosomal protein uL5 family. Part of the 50S ribosomal subunit; part of the 5S rRNA/L5/L18/L25 subcomplex. Contacts the 5S rRNA and the P site tRNA. Forms a bridge to the 30S subunit in the 70S ribosome.

Its function is as follows. This is one of the proteins that bind and probably mediate the attachment of the 5S RNA into the large ribosomal subunit, where it forms part of the central protuberance. In the 70S ribosome it contacts protein S13 of the 30S subunit (bridge B1b), connecting the 2 subunits; this bridge is implicated in subunit movement. Contacts the P site tRNA; the 5S rRNA and some of its associated proteins might help stabilize positioning of ribosome-bound tRNAs. The protein is Large ribosomal subunit protein uL5 of Picosynechococcus sp. (strain ATCC 27264 / PCC 7002 / PR-6) (Agmenellum quadruplicatum).